The following is a 287-amino-acid chain: tRNA-cytidine(32) 2-sulfurtransferase (287 aa).

The PP-loop motif signature appears at 58-63 (SGGKDS). 3 residues coordinate [4Fe-4S] cluster: cysteine 133, cysteine 136, and cysteine 224.

Belongs to the TtcA family. Homodimer. Requires Mg(2+) as cofactor. [4Fe-4S] cluster is required as a cofactor.

Its subcellular location is the cytoplasm. The enzyme catalyses cytidine(32) in tRNA + S-sulfanyl-L-cysteinyl-[cysteine desulfurase] + AH2 + ATP = 2-thiocytidine(32) in tRNA + L-cysteinyl-[cysteine desulfurase] + A + AMP + diphosphate + H(+). It functions in the pathway tRNA modification. In terms of biological role, catalyzes the ATP-dependent 2-thiolation of cytidine in position 32 of tRNA, to form 2-thiocytidine (s(2)C32). The sulfur atoms are provided by the cysteine/cysteine desulfurase (IscS) system. This is tRNA-cytidine(32) 2-sulfurtransferase from Dinoroseobacter shibae (strain DSM 16493 / NCIMB 14021 / DFL 12).